Here is a 264-residue protein sequence, read N- to C-terminus: Thymidylate synthase (264 aa).

Residue Arg21 participates in dUMP binding. His51 lines the (6R)-5,10-methylene-5,6,7,8-tetrahydrofolate pocket. 126 to 127 (RR) lines the dUMP pocket. Cys146 (nucleophile) is an active-site residue. Residues 166-169 (RSCD), Asn177, and 207-209 (HLY) contribute to the dUMP site. Asp169 contributes to the (6R)-5,10-methylene-5,6,7,8-tetrahydrofolate binding site. Ser263 lines the (6R)-5,10-methylene-5,6,7,8-tetrahydrofolate pocket.

Belongs to the thymidylate synthase family. Bacterial-type ThyA subfamily. Homodimer.

It is found in the cytoplasm. The enzyme catalyses dUMP + (6R)-5,10-methylene-5,6,7,8-tetrahydrofolate = 7,8-dihydrofolate + dTMP. It functions in the pathway pyrimidine metabolism; dTTP biosynthesis. Functionally, catalyzes the reductive methylation of 2'-deoxyuridine-5'-monophosphate (dUMP) to 2'-deoxythymidine-5'-monophosphate (dTMP) while utilizing 5,10-methylenetetrahydrofolate (mTHF) as the methyl donor and reductant in the reaction, yielding dihydrofolate (DHF) as a by-product. This enzymatic reaction provides an intracellular de novo source of dTMP, an essential precursor for DNA biosynthesis. In Buchnera aphidicola subsp. Schizaphis graminum (strain Sg), this protein is Thymidylate synthase.